A 975-amino-acid polypeptide reads, in one-letter code: Glycine dehydrogenase (decarboxylating) (975 aa).

Lys-723 bears the N6-(pyridoxal phosphate)lysine mark.

It belongs to the GcvP family. The glycine cleavage system is composed of four proteins: P, T, L and H. Requires pyridoxal 5'-phosphate as cofactor.

The enzyme catalyses N(6)-[(R)-lipoyl]-L-lysyl-[glycine-cleavage complex H protein] + glycine + H(+) = N(6)-[(R)-S(8)-aminomethyldihydrolipoyl]-L-lysyl-[glycine-cleavage complex H protein] + CO2. The glycine cleavage system catalyzes the degradation of glycine. The P protein binds the alpha-amino group of glycine through its pyridoxal phosphate cofactor; CO(2) is released and the remaining methylamine moiety is then transferred to the lipoamide cofactor of the H protein. This chain is Glycine dehydrogenase (decarboxylating), found in Burkholderia ambifaria (strain MC40-6).